The sequence spans 904 residues: Essential for maintenance of the cell wall protein 1 (904 aa).

TPR repeat units lie at residues 510 to 544 (WQLD…ETAL), 563 to 596 (INEN…GKYV), 603 to 636 (AKYY…YPLS), 637 to 670 (FETW…DPYH), 671 to 704 (ALSW…DAQK), and 706 to 739 (WKIW…RRDK).

Belongs to the TTC27 family.

The protein localises to the cytoplasm. Its subcellular location is the nucleus. Required for the maintenance of the cell wall integrity. The chain is Essential for maintenance of the cell wall protein 1 (EMW1) from Saccharomyces cerevisiae (strain ATCC 204508 / S288c) (Baker's yeast).